The sequence spans 414 residues: 2,3-diketo-5-methylthiopentyl-1-phosphate enolase (414 aa).

Catalysis depends on Lys-99, which acts as the Proton acceptor. Residues Lys-148, 174–177 (KDDE), His-265, Gly-338, and 360–361 (GG) contribute to the substrate site. Residues Lys-174, Asp-176, and Glu-177 each contribute to the Mg(2+) site. The residue at position 174 (Lys-174) is an N6-carboxylysine.

It belongs to the RuBisCO large chain family. Type IV subfamily. In terms of assembly, homodimer. The cofactor is Mg(2+).

The catalysed reaction is 5-methylsulfanyl-2,3-dioxopentyl phosphate = 2-hydroxy-5-methylsulfanyl-3-oxopent-1-enyl phosphate. It participates in amino-acid biosynthesis; L-methionine biosynthesis via salvage pathway; L-methionine from S-methyl-5-thio-alpha-D-ribose 1-phosphate: step 3/6. Functionally, catalyzes the enolization of 2,3-diketo-5-methylthiopentyl-1-phosphate (DK-MTP-1-P) into 2-hydroxy-3-keto-5-methylthiopentenyl-1-phosphate (HK-MTPenyl-1-P). The sequence is that of 2,3-diketo-5-methylthiopentyl-1-phosphate enolase from Bacillus cereus (strain ATCC 14579 / DSM 31 / CCUG 7414 / JCM 2152 / NBRC 15305 / NCIMB 9373 / NCTC 2599 / NRRL B-3711).